The sequence spans 225 residues: Imidazole glycerol phosphate synthase subunit HisH (225 aa).

One can recognise a Glutamine amidotransferase type-1 domain in the interval 3 to 225 (TIAIVDYGMG…LYRNFVDWQP (223 aa)). Catalysis depends on Cys-82, which acts as the Nucleophile. Residues His-205 and Glu-207 contribute to the active site.

Heterodimer of HisH and HisF.

The protein localises to the cytoplasm. It catalyses the reaction 5-[(5-phospho-1-deoxy-D-ribulos-1-ylimino)methylamino]-1-(5-phospho-beta-D-ribosyl)imidazole-4-carboxamide + L-glutamine = D-erythro-1-(imidazol-4-yl)glycerol 3-phosphate + 5-amino-1-(5-phospho-beta-D-ribosyl)imidazole-4-carboxamide + L-glutamate + H(+). It carries out the reaction L-glutamine + H2O = L-glutamate + NH4(+). Its pathway is amino-acid biosynthesis; L-histidine biosynthesis; L-histidine from 5-phospho-alpha-D-ribose 1-diphosphate: step 5/9. Functionally, IGPS catalyzes the conversion of PRFAR and glutamine to IGP, AICAR and glutamate. The HisH subunit catalyzes the hydrolysis of glutamine to glutamate and ammonia as part of the synthesis of IGP and AICAR. The resulting ammonia molecule is channeled to the active site of HisF. The protein is Imidazole glycerol phosphate synthase subunit HisH of Bordetella bronchiseptica (strain ATCC BAA-588 / NCTC 13252 / RB50) (Alcaligenes bronchisepticus).